The sequence spans 119 residues: Basic phospholipase A2 homolog 1 (119 aa).

7 cysteine pairs are disulfide-bonded: cysteine 11-cysteine 72, cysteine 27-cysteine 118, cysteine 29-cysteine 45, cysteine 44-cysteine 99, cysteine 51-cysteine 92, cysteine 61-cysteine 85, and cysteine 79-cysteine 90. Residues 107 to 117 (KENYNIDPKKR) form an important for membrane-damaging activities in eukaryotes and bacteria; heparin-binding region.

This sequence belongs to the phospholipase A2 family. Group I subfamily. D49 sub-subfamily. In terms of tissue distribution, expressed by the venom gland.

The protein localises to the secreted. This chain is Basic phospholipase A2 homolog 1, found in Notechis scutatus scutatus (Mainland tiger snake).